The sequence spans 662 residues: NADH-ubiquinone oxidoreductase chain 5 (662 aa).

A run of 16 helical transmembrane segments spans residues 40 to 62 (AALS…IVIG), 77 to 99 (LFDS…VHLY), 112 to 129 (RFFS…VLVA), 133 to 155 (YFIM…NFWY), 168 to 190 (LTVN…WVFG), 200 to 222 (VAPY…GAMA), 243 to 262 (VSAL…LMLR), 272 to 294 (TVLV…TGLL), 301 to 320 (VIAY…VGLS), 325 to 347 (ALFH…GAVI), 360 to 382 (GGLV…SLMA), 408 to 430 (TIAY…RLVS), 450 to 472 (APMI…GYIA), 510 to 529 (LLPA…LYHV), 609 to 631 (GVIT…LVFA), and 636 to 658 (VFNE…LPSS).

Belongs to the complex I subunit 5 family.

Its subcellular location is the mitochondrion inner membrane. It carries out the reaction a ubiquinone + NADH + 5 H(+)(in) = a ubiquinol + NAD(+) + 4 H(+)(out). Core subunit of the mitochondrial membrane respiratory chain NADH dehydrogenase (Complex I) that is believed to belong to the minimal assembly required for catalysis. Complex I functions in the transfer of electrons from NADH to the respiratory chain. The immediate electron acceptor for the enzyme is believed to be ubiquinone. This is NADH-ubiquinone oxidoreductase chain 5 (ND5) from Cryptococcus neoformans var. grubii serotype A (strain H99 / ATCC 208821 / CBS 10515 / FGSC 9487) (Filobasidiella neoformans var. grubii).